Here is a 791-residue protein sequence, read N- to C-terminus: Cytochrome c oxidase polypeptide I+III (791 aa).

Residues 1–473 (MAITAKPKAG…LLSTIGAYIL (473 aa)) form a COX1 region. The helical transmembrane segment at 29–49 (LMYTATAFFAFALAGVFSLLI) threads the bilayer. Residue His73 participates in Fe(II)-heme a binding. 17 consecutive transmembrane segments (helical) span residues 78–98 (LFFF…VPLM), 111–131 (AFSY…YFFP), 155–175 (FYLA…ANFV), 201–221 (ASVL…LVLL), 244–264 (FFWF…LGIL), 282–302 (MVWA…HHMF), 312–332 (IAFA…LFNI), 347–367 (LYWV…GVML), 381–401 (FVVA…AFAG), 423–443 (FWLF…LGYL), 464–484 (LLST…IYTM), 566–586 (FAFF…WVFL), 617–637 (AWMG…ILIA), 657–677 (LWLA…VHFA), 691–711 (FGLL…SWEF), 729–749 (FFTI…GLIL), and 771–791 (SMYW…FYVW). Positions 250, 254, 299, and 300 each coordinate Cu cation. The segment at residues 250–254 (HPTVY) is a cross-link (1'-histidyl-3'-tyrosine (His-Tyr)). His385 is a binding site for heme a3. Fe(II)-heme a is bound at residue His387. The segment at 545-791 (DPAHIHLPNS…LVIVTIFYVW (247 aa)) is COX3.

It in the N-terminal section; belongs to the heme-copper respiratory oxidase family. This sequence in the C-terminal section; belongs to the cytochrome c oxidase subunit 3 family. Possibly a heterodimer of A-protein (contains: cytochrome c oxidase subunits I and III) and subunit II. The A-protein could also present a precursor form of subunits I and III. It depends on Cu(2+) as a cofactor. The cofactor is heme.

The protein resides in the cell membrane. It carries out the reaction 4 Fe(II)-[cytochrome c] + O2 + 8 H(+)(in) = 4 Fe(III)-[cytochrome c] + 2 H2O + 4 H(+)(out). The protein operates within energy metabolism; oxidative phosphorylation. Cytochrome c oxidase is the component of the respiratory chain that catalyzes the reduction of oxygen to water. Subunits 1-3 form the functional core of the enzyme complex. Co I is the catalytic subunit of the enzyme. Electrons originating in cytochrome c are transferred via the copper A center of subunit 2 and heme a of subunit 1 to the bimetallic center formed by heme a3 and copper B. This cytochrome c oxidase shows proton pump activity across the membrane in addition to the electron transfer. This Thermus thermophilus (strain ATCC 27634 / DSM 579 / HB8) protein is Cytochrome c oxidase polypeptide I+III (caaA).